The chain runs to 100 residues: Class II hydrophobin 4 (100 aa).

Residues 1–17 form the signal peptide; sequence MQFYAIASLFLAGTAFA. Cystine bridges form between C29/C79, C40/C70, C41/C53, and C80/C92.

It belongs to the cerato-ulmin hydrophobin family.

It localises to the secreted. Its subcellular location is the cell wall. In terms of biological role, aerial growth, conidiation, and dispersal of filamentous fungi in the environment rely upon a capability of their secreting small amphipathic proteins called hydrophobins (HPBs) with low sequence identity. Class I can self-assemble into an outermost layer of rodlet bundles on aerial cell surfaces, conferring cellular hydrophobicity that supports fungal growth, development and dispersal; whereas Class II form highly ordered films at water-air interfaces through intermolecular interactions but contribute nothing to the rodlet structure. Does not seem to be important for the ability to cause seedling disease. The sequence is that of Class II hydrophobin 4 from Gibberella moniliformis (Maize ear and stalk rot fungus).